We begin with the raw amino-acid sequence, 845 residues long: G-type lectin S-receptor-like serine/threonine-protein kinase At1g11410 (845 aa).

The N-terminal stretch at 1–21 (MKFFFIFFIFLFSFLIQSCYS) is a signal peptide. The 126-residue stretch at 22–147 (DNTILRSQSL…VTGKSFWESF (126 aa)) folds into the Bulb-type lectin domain. Residues 22–441 (DNTILRSQSL…NGNGASGKKR (420 aa)) are Extracellular-facing. 5 N-linked (GlcNAc...) asparagine glycosylation sites follow: asparagine 82, asparagine 103, asparagine 185, asparagine 231, and asparagine 259. An EGF-like domain is found at 283 to 321 (PEDKCDIYNHCGFNGYCDSTSTEKFECSCLPGYEPKTPR). 2 disulfide bridges follow: cysteine 287-cysteine 299 and cysteine 293-cysteine 309. Residues 341–424 (CNGKEGFAKL…SGQDFYLRVD (84 aa)) enclose the PAN domain. Asparagine 357, asparagine 366, and asparagine 379 each carry an N-linked (GlcNAc...) asparagine glycan. Disulfide bonds link cysteine 372/cysteine 399 and cysteine 376/cysteine 382. The helical transmembrane segment at 442 to 462 (LVLILISLIAVVMLLLISFHC) threads the bilayer. Over 463-845 (YLRKRRQRTQ…DVTLTDVQGR (383 aa)) the chain is Cytoplasmic. The Protein kinase domain occupies 523 to 808 (FAFQNKLGAG…DLPSPKHPAF (286 aa)). ATP contacts are provided by residues 529 to 537 (LGAGGFGPV) and lysine 551. Residues 612-629 (EQRAELDWPKRMGIIRGI) are caM-binding. Aspartate 648 acts as the Proton acceptor in catalysis. Residues 803 to 845 (PKHPAFTAGRRRNTKTGGSSDNWPSGETSSTINDVTLTDVQGR) are disordered. The span at 817 to 845 (KTGGSSDNWPSGETSSTINDVTLTDVQGR) shows a compositional bias: polar residues.

Belongs to the protein kinase superfamily. Ser/Thr protein kinase family.

The protein resides in the cell membrane. It carries out the reaction L-seryl-[protein] + ATP = O-phospho-L-seryl-[protein] + ADP + H(+). The enzyme catalyses L-threonyl-[protein] + ATP = O-phospho-L-threonyl-[protein] + ADP + H(+). The chain is G-type lectin S-receptor-like serine/threonine-protein kinase At1g11410 from Arabidopsis thaliana (Mouse-ear cress).